Consider the following 2173-residue polypeptide: Mediator of RNA polymerase II transcription subunit 12 (2173 aa).

Disordered regions lie at residues M1–D34, G318–N345, A630–D718, K784–A804, M1380–S1404, E1443–S1467, E1737–E1780, and Q2020–Q2068. A compositionally biased stretch (basic and acidic residues) spans Q702–M717. Over residues G1389 to S1404 the composition is skewed to low complexity. Basic and acidic residues-rich tracts occupy residues E1443 to K1462 and E1747 to K1759. The segment covering Q2034–Q2057 has biased composition (low complexity).

This sequence belongs to the Mediator complex subunit 12 family. As to quaternary structure, component of the Mediator complex.

Its subcellular location is the nucleus. In terms of biological role, component of the Mediator complex, a coactivator involved in regulated gene transcription of nearly all RNA polymerase II-dependent genes. Mediator functions as a bridge to convey information from gene-specific regulatory proteins to the basal RNA polymerase II transcription machinery. Mediator is recruited to promoters by direct interactions with regulatory proteins and serves as a scaffold for the assembly of a functional preinitiation complex with RNA polymerase II and the general transcription factors. Required for development of the body axis, brain, ear, kidney, forelimb and neural crest and for pigmentation. Acts as a coactivator for sox9a and/or sox9b promoting the expression of several neuronal determination genes. This is Mediator of RNA polymerase II transcription subunit 12 (med12) from Danio rerio (Zebrafish).